Here is a 264-residue protein sequence, read N- to C-terminus: Hydroxyethylthiazole kinase (264 aa).

Substrate is bound at residue M43. Residues K119 and S165 each coordinate ATP. Residue G192 participates in substrate binding.

This sequence belongs to the Thz kinase family. Mg(2+) is required as a cofactor.

It carries out the reaction 5-(2-hydroxyethyl)-4-methylthiazole + ATP = 4-methyl-5-(2-phosphooxyethyl)-thiazole + ADP + H(+). The protein operates within cofactor biosynthesis; thiamine diphosphate biosynthesis; 4-methyl-5-(2-phosphoethyl)-thiazole from 5-(2-hydroxyethyl)-4-methylthiazole: step 1/1. In terms of biological role, catalyzes the phosphorylation of the hydroxyl group of 4-methyl-5-beta-hydroxyethylthiazole (THZ). The sequence is that of Hydroxyethylthiazole kinase from Methanocorpusculum labreanum (strain ATCC 43576 / DSM 4855 / Z).